Consider the following 387-residue polypeptide: Phosphoglycerate kinase (387 aa).

Substrate is bound by residues 21-23, Arg-36, 59-62, Arg-113, and Arg-146; these read DLN and HLGR. ATP contacts are provided by residues Lys-197, Glu-314, and 340 to 343; that span reads GGDT.

The protein belongs to the phosphoglycerate kinase family. In terms of assembly, monomer.

The protein localises to the cytoplasm. It catalyses the reaction (2R)-3-phosphoglycerate + ATP = (2R)-3-phospho-glyceroyl phosphate + ADP. It participates in carbohydrate degradation; glycolysis; pyruvate from D-glyceraldehyde 3-phosphate: step 2/5. This is Phosphoglycerate kinase from Alcanivorax borkumensis (strain ATCC 700651 / DSM 11573 / NCIMB 13689 / SK2).